Reading from the N-terminus, the 349-residue chain is Increased DNA methylation 2 (349 aa).

The interval glutamate 210–valine 230 is disordered. Residues glutamate 233 to valine 349 form the sHSP domain.

It belongs to the small heat shock protein (HSP20) family. Homodimer or oligomer. May form an 16-mer complex. Interacts with MBD7 (via C-terminus). Interacts with IDM1 (via N-terminus). Interacts with IMD3. Part of a complex made of MBD7, IDM1, IDM2, IDM3 and ROS1. Expressed in cotyledons and hypocotyls in young seedlings.

It is found in the nucleus. The protein resides in the nucleoplasm. Prevents DNA hypermethylation and transcriptional silencing of transgenes and of some endogenous genes. May act as a molecular chaperone of IDM1, regulating its H3K18 acetylation activity. The polypeptide is Increased DNA methylation 2 (Arabidopsis thaliana (Mouse-ear cress)).